Here is a 363-residue protein sequence, read N- to C-terminus: Uroporphyrinogen decarboxylase (363 aa).

Substrate-binding positions include arginine 27–arginine 31, aspartate 77, tyrosine 157, threonine 212, and histidine 333.

The protein belongs to the uroporphyrinogen decarboxylase family. In terms of assembly, homodimer.

Its subcellular location is the cytoplasm. The catalysed reaction is uroporphyrinogen III + 4 H(+) = coproporphyrinogen III + 4 CO2. Its pathway is porphyrin-containing compound metabolism; protoporphyrin-IX biosynthesis; coproporphyrinogen-III from 5-aminolevulinate: step 4/4. In terms of biological role, catalyzes the decarboxylation of four acetate groups of uroporphyrinogen-III to yield coproporphyrinogen-III. This chain is Uroporphyrinogen decarboxylase, found in Cupriavidus necator (strain ATCC 17699 / DSM 428 / KCTC 22496 / NCIMB 10442 / H16 / Stanier 337) (Ralstonia eutropha).